We begin with the raw amino-acid sequence, 484 residues long: MKVLMVASEVAPFARTGGLAEVTAALPAALRRMGHDVRVIMPFYRCAAQTELGVRKARKSAEVSLNGETHKGFLRQAALGDVPVYLVENREFFSRDYLYGTPEGDYPDNPRRFAFFCRSVLQFLKRMDFRPDVIHCHDWQTALIPIILRLEAADDPFFARTATVFTIHNLAYQGLFPAPAIAETGLPSALFTTEWLEYYGQLNLMKGAILTADLITTVSETYRREIMTPTQGCGLEGVLARRGDDLFGIVNGIDTDEWNPAADKRIFRNYSARALAGKAADKLELQRELGMPAAPSVPLIGMVSRLAEQKGIDLVLELLPRLAESELQFVLLGTGNACYLERLNSFRSKGAANISINLGFNDPLAPKIYAGSDLFLMPSRFEPCGLSQLIAMRYGTVPVVRHTGGLRDTVVDVTRHPREGTGFTFEDFTADACWEAIERALAGYRDRESWRRIMRRGMHRDVSWHNAAGRYETLYRMAADTRRG.

Arg15 is a binding site for ADP-alpha-D-glucose.

The protein belongs to the glycosyltransferase 1 family. Bacterial/plant glycogen synthase subfamily.

The enzyme catalyses [(1-&gt;4)-alpha-D-glucosyl](n) + ADP-alpha-D-glucose = [(1-&gt;4)-alpha-D-glucosyl](n+1) + ADP + H(+). The protein operates within glycan biosynthesis; glycogen biosynthesis. Functionally, synthesizes alpha-1,4-glucan chains using ADP-glucose. The polypeptide is Glycogen synthase 2 (Geobacter sulfurreducens (strain ATCC 51573 / DSM 12127 / PCA)).